The following is a 650-amino-acid chain: Acetyl-coenzyme A synthetase (650 aa).

CoA-binding positions include 191 to 194, Thr311, and Asn335; that span reads RGGR. Residues 387 to 389, 411 to 416, Asp501, and Arg516 contribute to the ATP site; these read GEP and DTWWQT. CoA is bound at residue Ser524. Arg527 provides a ligand contact to ATP. Mg(2+) contacts are provided by Val538, His540, and Ile543. Arg585 provides a ligand contact to CoA. Lys610 carries the N6-acetyllysine modification.

It belongs to the ATP-dependent AMP-binding enzyme family. Mg(2+) serves as cofactor. In terms of processing, acetylated. Deacetylation by the SIR2-homolog deacetylase activates the enzyme.

It catalyses the reaction acetate + ATP + CoA = acetyl-CoA + AMP + diphosphate. In terms of biological role, catalyzes the conversion of acetate into acetyl-CoA (AcCoA), an essential intermediate at the junction of anabolic and catabolic pathways. AcsA undergoes a two-step reaction. In the first half reaction, AcsA combines acetate with ATP to form acetyl-adenylate (AcAMP) intermediate. In the second half reaction, it can then transfer the acetyl group from AcAMP to the sulfhydryl group of CoA, forming the product AcCoA. In Vibrio vulnificus (strain CMCP6), this protein is Acetyl-coenzyme A synthetase.